The primary structure comprises 317 residues: 4-diphosphocytidyl-2-C-methyl-D-erythritol kinase (317 aa).

Lysine 11 is a catalytic residue. 99-109 is a binding site for ATP; sequence PVAAGLAGGST. Aspartate 141 is a catalytic residue.

It belongs to the GHMP kinase family. IspE subfamily.

The catalysed reaction is 4-CDP-2-C-methyl-D-erythritol + ATP = 4-CDP-2-C-methyl-D-erythritol 2-phosphate + ADP + H(+). It functions in the pathway isoprenoid biosynthesis; isopentenyl diphosphate biosynthesis via DXP pathway; isopentenyl diphosphate from 1-deoxy-D-xylulose 5-phosphate: step 3/6. Catalyzes the phosphorylation of the position 2 hydroxy group of 4-diphosphocytidyl-2C-methyl-D-erythritol. This Nostoc sp. (strain PCC 7120 / SAG 25.82 / UTEX 2576) protein is 4-diphosphocytidyl-2-C-methyl-D-erythritol kinase.